Consider the following 334-residue polypeptide: Homoserine O-acetyltransferase (334 aa).

Residues 61 to 318 (LVLHALTGDS…GSIHGHDAFL (258 aa)) form the AB hydrolase-1 domain. Serine 148 functions as the Nucleophile in the catalytic mechanism. Arginine 205 serves as a coordination point for substrate. Catalysis depends on residues aspartate 285 and histidine 314. Position 315 (aspartate 315) interacts with substrate.

Belongs to the AB hydrolase superfamily. MetX family. As to quaternary structure, homodimer.

The protein localises to the cytoplasm. It carries out the reaction L-homoserine + acetyl-CoA = O-acetyl-L-homoserine + CoA. Its pathway is amino-acid biosynthesis; L-methionine biosynthesis via de novo pathway; O-acetyl-L-homoserine from L-homoserine: step 1/1. Functionally, transfers an acetyl group from acetyl-CoA to L-homoserine, forming acetyl-L-homoserine. The polypeptide is Homoserine O-acetyltransferase (Deinococcus radiodurans (strain ATCC 13939 / DSM 20539 / JCM 16871 / CCUG 27074 / LMG 4051 / NBRC 15346 / NCIMB 9279 / VKM B-1422 / R1)).